Consider the following 421-residue polypeptide: Enolase (421 aa).

(2R)-2-phosphoglycerate is bound at residue Gln-161. Residue Glu-203 is the Proton donor of the active site. Residues Asp-240, Glu-283, and Asp-310 each contribute to the Mg(2+) site. (2R)-2-phosphoglycerate is bound by residues Lys-335, Arg-364, Ser-365, and Lys-386. Catalysis depends on Lys-335, which acts as the Proton acceptor.

Belongs to the enolase family. It depends on Mg(2+) as a cofactor.

It localises to the cytoplasm. It is found in the secreted. Its subcellular location is the cell surface. The catalysed reaction is (2R)-2-phosphoglycerate = phosphoenolpyruvate + H2O. It participates in carbohydrate degradation; glycolysis; pyruvate from D-glyceraldehyde 3-phosphate: step 4/5. Catalyzes the reversible conversion of 2-phosphoglycerate (2-PG) into phosphoenolpyruvate (PEP). It is essential for the degradation of carbohydrates via glycolysis. The polypeptide is Enolase (Sulfurimonas denitrificans (strain ATCC 33889 / DSM 1251) (Thiomicrospira denitrificans (strain ATCC 33889 / DSM 1251))).